Consider the following 752-residue polypeptide: Probable beta-glucosidase D (752 aa).

An N-terminal signal peptide occupies residues 1 to 18 (MRFVSLAVGAALLGAAGA). N-linked (GlcNAc...) asparagine glycosylation is found at N187 and N237. The active site involves D265. N-linked (GlcNAc...) asparagine glycans are attached at residues N299, N343, N441, N510, N532, N571, N586, N638, N661, and N743.

The protein belongs to the glycosyl hydrolase 3 family.

It is found in the secreted. It catalyses the reaction Hydrolysis of terminal, non-reducing beta-D-glucosyl residues with release of beta-D-glucose.. The protein operates within glycan metabolism; cellulose degradation. Its function is as follows. Beta-glucosidases are one of a number of cellulolytic enzymes involved in the degradation of cellulosic biomass. Catalyzes the last step releasing glucose from the inhibitory cellobiose. This Aspergillus flavus (strain ATCC 200026 / FGSC A1120 / IAM 13836 / NRRL 3357 / JCM 12722 / SRRC 167) protein is Probable beta-glucosidase D (bglD).